Reading from the N-terminus, the 1820-residue chain is uncharacterized protein (1820 aa).

Disordered regions lie at residues 1-73 (MQWT…TLSG), 86-158 (TTTT…VRSA), 226-260 (GSSGPSSLVNSPALGRRKRYTSNSSNCSSQFNNNY), 286-366 (EERA…QETE), 453-497 (DVQD…RNLS), 519-548 (LSSISNKAPGGVPTESGVVTRPDSSDTDTA), 577-597 (GNSSTTTTTTSELGVPRPPTP), 619-689 (GAGT…TASG), and 735-830 (HSHN…TPSS). A compositionally biased stretch (polar residues) spans 20-31 (NRNSIEQRTPAN). Over residues 86 to 128 (TTTTTIIESSSSTNTTLEKNSPSPAGGSCSSGSGSLSPAYLQH) the composition is skewed to low complexity. The span at 129–146 (HLQHHGSPLHHLQVHHHT) shows a compositional bias: basic residues. The segment covering 247–259 (SNSSNCSSQFNNN) has biased composition (low complexity). Residues 265–308 (VDSLDDMLRKLTELEQRVIEAEERAEEAEDKVRAMEQRLSEWPK) are a coiled coil. A compositionally biased stretch (basic and acidic residues) spans 294–305 (DKVRAMEQRLSE). The span at 346–358 (ASGGATAGAAGSG) shows a compositional bias: low complexity. A coiled-coil region spans residues 362–438 (TQETEKTITS…LKNHIANQSQ (77 aa)). The span at 453–463 (DVQDFTGSGSN) shows a compositional bias: polar residues. Phosphoserine is present on residues serine 542 and serine 543. A compositionally biased stretch (low complexity) spans 623-632 (GTSTAESTAS). The segment covering 655 to 669 (HGSGTGIGTGDGHGT) has biased composition (gly residues). Over residues 738–769 (NSSSTDNTETSTSGSASSPSKSLKTSSSLSPA) the composition is skewed to low complexity. The span at 787–818 (QSRTSTTPSSRINQHLQPSQHQHHTLSNQNHG) shows a compositional bias: polar residues. PH domains follow at residues 909–1003 (SLEK…NVQR) and 1017–1124 (KPTV…VVSG). Phosphoserine occurs at positions 1073, 1075, and 1077. A MyTH4 domain is found at 1159-1378 (HTKDTITAPL…PSRMEVLSIL (220 aa)). The region spanning 1389–1712 (HAIPVHMMNS…DYMNALGHTV (324 aa)) is the FERM domain. Disordered stretches follow at residues 1713-1748 (PGTPQMNSLTRNGSHRSLRTSQRPNLGGGSAVATGF) and 1764-1820 (ATHT…QRIK). Polar residues predominate over residues 1714 to 1724 (GTPQMNSLTRN). The span at 1764 to 1781 (ATHTLNSNHSHTLSSSHH) shows a compositional bias: low complexity. Positions 1805–1820 (HQPDILKSTPDHQRIK) are enriched in basic and acidic residues.

This is an uncharacterized protein from Drosophila melanogaster (Fruit fly).